We begin with the raw amino-acid sequence, 701 residues long: Elongation factor G (701 aa).

Residues 10–286 (NKVRNIGIMA…AVIDYLPSPL (277 aa)) enclose the tr-type G domain. GTP-binding positions include 19 to 26 (AHIDAGKT), 83 to 87 (DTPGH), and 137 to 140 (NKMD).

Belongs to the TRAFAC class translation factor GTPase superfamily. Classic translation factor GTPase family. EF-G/EF-2 subfamily.

It localises to the cytoplasm. Functionally, catalyzes the GTP-dependent ribosomal translocation step during translation elongation. During this step, the ribosome changes from the pre-translocational (PRE) to the post-translocational (POST) state as the newly formed A-site-bound peptidyl-tRNA and P-site-bound deacylated tRNA move to the P and E sites, respectively. Catalyzes the coordinated movement of the two tRNA molecules, the mRNA and conformational changes in the ribosome. The protein is Elongation factor G of Mycobacteroides abscessus (strain ATCC 19977 / DSM 44196 / CCUG 20993 / CIP 104536 / JCM 13569 / NCTC 13031 / TMC 1543 / L948) (Mycobacterium abscessus).